Here is a 78-residue protein sequence, read N- to C-terminus: UPF0612 protein new22 (78 aa).

It belongs to the UPF0612 family.

The polypeptide is UPF0612 protein new22 (new22) (Schizosaccharomyces pombe (strain 972 / ATCC 24843) (Fission yeast)).